A 460-amino-acid polypeptide reads, in one-letter code: Argininosuccinate lyase (460 aa).

Belongs to the lyase 1 family. Argininosuccinate lyase subfamily.

It is found in the cytoplasm. The catalysed reaction is 2-(N(omega)-L-arginino)succinate = fumarate + L-arginine. It participates in amino-acid biosynthesis; L-arginine biosynthesis; L-arginine from L-ornithine and carbamoyl phosphate: step 3/3. This is Argininosuccinate lyase from Campylobacter hominis (strain ATCC BAA-381 / DSM 21671 / CCUG 45161 / LMG 19568 / NCTC 13146 / CH001A).